The following is a 618-amino-acid chain: Serine/threonine-protein kinase TNNI3K (618 aa).

G2 carries N-myristoyl glycine lipidation. Positions 21–51 (SESYVITIERLEDDLKIKEKELTELRNIFGS) form a coiled coil. 10 ANK repeats span residues 66–96 (NGLSLLHLCCICGGNKSHIRTLMLKGLRPSR), 100–129 (NGFTALHLAVYKDNAELITSLLHGGADIQQ), 133–162 (GGLTALHIATIAGHLEAADVLLQHGANVNI), 166–195 (VFFTPLHIAAYYGHEQVTRLLLKFGADVNV), 199–228 (VGDRPLHLASAKGFLNIAKLLMEEGSKADV), 234–263 (EDHVPLHFCSRFGHHDIVKYLLQNDLEVQP), 269–298 (YGDTPLHLACYNGKFEVAKEIIQISGTESL), 304–335 (FSETAFHSACTYGKSIDLVKFLLDQNVININH), 339–368 (DGHTGLHSACYHGHIHLVQFLLDNGADMNL), and 381–410 (DEQTCLMWAYEKGHDAIVTLLKHYKRPQDE). One can recognise a Protein kinase domain in the interval 463–618 (IEFHEIIGSG…TAHTIYLLAP (156 aa)). ATP is bound by residues 469–477 (IGSGSFGKV) and K490. The Proton acceptor role is filled by D588.

Belongs to the protein kinase superfamily. TKL Ser/Thr protein kinase family. MAP kinase kinase kinase subfamily. Interacts with TNNI3, ACTC, ACTA1, MYBPC3, AIP, FABP3 and HADHB. Mg(2+) serves as cofactor. Post-translationally, autophosphorylated.

The protein resides in the nucleus. It is found in the cytoplasm. The catalysed reaction is L-seryl-[protein] + ATP = O-phospho-L-seryl-[protein] + ADP + H(+). The enzyme catalyses L-threonyl-[protein] + ATP = O-phospho-L-threonyl-[protein] + ADP + H(+). May play a role in cardiac physiology. The polypeptide is Serine/threonine-protein kinase TNNI3K (Pongo abelii (Sumatran orangutan)).